The primary structure comprises 115 residues: NAD(P)H-quinone oxidoreductase subunit M (115 aa).

Belongs to the complex I NdhM subunit family. As to quaternary structure, NDH-1 can be composed of about 15 different subunits; different subcomplexes with different compositions have been identified which probably have different functions.

The protein resides in the cellular thylakoid membrane. It carries out the reaction a plastoquinone + NADH + (n+1) H(+)(in) = a plastoquinol + NAD(+) + n H(+)(out). The catalysed reaction is a plastoquinone + NADPH + (n+1) H(+)(in) = a plastoquinol + NADP(+) + n H(+)(out). Its function is as follows. NDH-1 shuttles electrons from an unknown electron donor, via FMN and iron-sulfur (Fe-S) centers, to quinones in the respiratory and/or the photosynthetic chain. The immediate electron acceptor for the enzyme in this species is believed to be plastoquinone. Couples the redox reaction to proton translocation, and thus conserves the redox energy in a proton gradient. Cyanobacterial NDH-1 also plays a role in inorganic carbon-concentration. The sequence is that of NAD(P)H-quinone oxidoreductase subunit M from Synechococcus sp. (strain WH7803).